The sequence spans 173 residues: Ribosome maturation factor RimM (173 aa).

The PRC barrel domain maps to 94–168 (SNESYLCDLL…LIRINPPKGL (75 aa)).

The protein belongs to the RimM family. Binds ribosomal protein uS19.

It localises to the cytoplasm. In terms of biological role, an accessory protein needed during the final step in the assembly of 30S ribosomal subunit, possibly for assembly of the head region. Essential for efficient processing of 16S rRNA. May be needed both before and after RbfA during the maturation of 16S rRNA. It has affinity for free ribosomal 30S subunits but not for 70S ribosomes. The chain is Ribosome maturation factor RimM from Lawsonia intracellularis (strain PHE/MN1-00).